A 286-amino-acid polypeptide reads, in one-letter code: UDP-3-O-acyl-N-acetylglucosamine deacetylase (286 aa).

The Zn(2+) site is built by His-79, His-237, and Asp-241. The active-site Proton donor is His-264.

This sequence belongs to the LpxC family. Zn(2+) serves as cofactor.

It carries out the reaction a UDP-3-O-[(3R)-3-hydroxyacyl]-N-acetyl-alpha-D-glucosamine + H2O = a UDP-3-O-[(3R)-3-hydroxyacyl]-alpha-D-glucosamine + acetate. It functions in the pathway glycolipid biosynthesis; lipid IV(A) biosynthesis; lipid IV(A) from (3R)-3-hydroxytetradecanoyl-[acyl-carrier-protein] and UDP-N-acetyl-alpha-D-glucosamine: step 2/6. Its function is as follows. Catalyzes the hydrolysis of UDP-3-O-myristoyl-N-acetylglucosamine to form UDP-3-O-myristoylglucosamine and acetate, the committed step in lipid A biosynthesis. In Brucella abortus (strain 2308), this protein is UDP-3-O-acyl-N-acetylglucosamine deacetylase.